We begin with the raw amino-acid sequence, 466 residues long: Ribulose bisphosphate carboxylase large chain (466 aa).

An N6,N6,N6-trimethyllysine modification is found at lysine 5. Asparagine 114 and threonine 164 together coordinate substrate. The active-site Proton acceptor is lysine 166. Substrate is bound at residue lysine 168. The Mg(2+) site is built by lysine 192, aspartate 194, and glutamate 195. Lysine 192 is subject to N6-carboxylysine. The Proton acceptor role is filled by histidine 285. Positions 286, 318, and 370 each coordinate substrate.

The protein belongs to the RuBisCO large chain family. Type I subfamily. As to quaternary structure, heterohexadecamer of 8 large chains and 8 small chains; disulfide-linked. The disulfide link is formed within the large subunit homodimers. The cofactor is Mg(2+). The disulfide bond which can form in the large chain dimeric partners within the hexadecamer appears to be associated with oxidative stress and protein turnover.

The protein resides in the plastid. It localises to the chloroplast. It carries out the reaction 2 (2R)-3-phosphoglycerate + 2 H(+) = D-ribulose 1,5-bisphosphate + CO2 + H2O. The enzyme catalyses D-ribulose 1,5-bisphosphate + O2 = 2-phosphoglycolate + (2R)-3-phosphoglycerate + 2 H(+). RuBisCO catalyzes two reactions: the carboxylation of D-ribulose 1,5-bisphosphate, the primary event in carbon dioxide fixation, as well as the oxidative fragmentation of the pentose substrate in the photorespiration process. Both reactions occur simultaneously and in competition at the same active site. The polypeptide is Ribulose bisphosphate carboxylase large chain (Gonopterodendron arboreum (Maracaibo lignum-vitae)).